We begin with the raw amino-acid sequence, 350 residues long: Phosphotriesterase-related protein (350 aa).

Positions 22, 24, 169, 201, 230, and 298 each coordinate a divalent metal cation.

It belongs to the metallo-dependent hydrolases superfamily. Phosphotriesterase family. A divalent metal cation is required as a cofactor.

This is Phosphotriesterase-related protein from Drosophila pseudoobscura pseudoobscura (Fruit fly).